Reading from the N-terminus, the 458-residue chain is RuvB-like helicase 1 (458 aa).

Position 71–78 (71–78 (GGPGTGKT)) interacts with ATP.

The protein belongs to the RuvB family. May form heterododecamers with RVB2. Component of the SWR1 chromatin remodeling complex, the INO80 chromatin remodeling complex, and of the R2TP complex.

Its subcellular location is the nucleus. It carries out the reaction ATP + H2O = ADP + phosphate + H(+). Functionally, DNA helicase which participates in several chromatin remodeling complexes, including the SWR1 and the INO80 complexes. The SWR1 complex mediates the ATP-dependent exchange of histone H2A for the H2A variant HZT1 leading to transcriptional regulation of selected genes by chromatin remodeling. The INO80 complex remodels chromatin by shifting nucleosomes and is involved in DNA repair. Also involved in pre-rRNA processing. The protein is RuvB-like helicase 1 (RVB1) of Gibberella zeae (strain ATCC MYA-4620 / CBS 123657 / FGSC 9075 / NRRL 31084 / PH-1) (Wheat head blight fungus).